The chain runs to 25 residues: Gamma-conotoxin PiVIIA (25 aa).

Disulfide bonds link Cys1–Cys15, Cys8–Cys19, and Cys14–Cys24. A 4-hydroxyproline modification is found at Pro4. 4-carboxyglutamate occurs at positions 13 and 20.

Belongs to the conotoxin O2 superfamily. In terms of tissue distribution, expressed by the venom duct.

It is found in the secreted. Micromolar concentrations of PiVIIA increase the magnitude of the macroscopic calcium current in DRG neurons from rat. An increase, even modest of the calcium current, may have a significant impact in the excitability and electrical activity of neurons, and may set up PiVIIA as a member of the pharmacological family of the gamma-conotoxins. This chain is Gamma-conotoxin PiVIIA, found in Conus princeps (Prince cone).